The chain runs to 180 residues: UPF0227 protein Ent638_1623 (180 aa).

It belongs to the UPF0227 family.

In Enterobacter sp. (strain 638), this protein is UPF0227 protein Ent638_1623.